The following is a 209-amino-acid chain: Protein bli-3 (209 aa).

Positions 1-11 are enriched in polar residues; that stretch reads MSGQGFSNADT. Residues 1 to 24 form a disordered region; that stretch reads MSGQGFSNADTGNKPADPYKQANL.

This Neurospora crassa (strain ATCC 24698 / 74-OR23-1A / CBS 708.71 / DSM 1257 / FGSC 987) protein is Protein bli-3 (bli-3).